Reading from the N-terminus, the 719-residue chain is Polyribonucleotide nucleotidyltransferase (719 aa).

Mg(2+)-binding residues include D495 and D501. Positions 562 to 621 constitute a KH domain; that stretch reads PRRLSFRIDPELIGTVIGPGGRTIKGITERTNTKIDIEDTGIVTVASHDGAAAEEAQKII. Residues 631-699 form the S1 motif domain; that stretch reads GEYFDGKVTR…NRGRINLTLR (69 aa). The interval 699–719 is disordered; the sequence is RGVPQDGSDPQPTVILPIGES.

It belongs to the polyribonucleotide nucleotidyltransferase family. It depends on Mg(2+) as a cofactor.

The protein resides in the cytoplasm. It carries out the reaction RNA(n+1) + phosphate = RNA(n) + a ribonucleoside 5'-diphosphate. Involved in mRNA degradation. Catalyzes the phosphorolysis of single-stranded polyribonucleotides processively in the 3'- to 5'-direction. This chain is Polyribonucleotide nucleotidyltransferase, found in Synechococcus sp. (strain RCC307).